The sequence spans 101 residues: Small ribosomal subunit protein bS18c (101 aa).

This sequence belongs to the bacterial ribosomal protein bS18 family. As to quaternary structure, part of the 30S ribosomal subunit.

It localises to the plastid. The protein localises to the chloroplast. The chain is Small ribosomal subunit protein bS18c from Carica papaya (Papaya).